The chain runs to 711 residues: Ecdysone-inducible protein E75 (711 aa).

Residues Thr44–Phe120 constitute a DNA-binding region (nuclear receptor). 2 consecutive NR C4-type zinc fingers follow at residues Cys47–Cys67 and Cys84–Cys108. One can recognise an NR LBD domain in the interval Asp153 to Ala400. 4 disordered regions span residues Ser405 to Thr432, Leu466 to Val530, Ala559 to Ala602, and Asp680 to Ala711. Composition is skewed to basic and acidic residues over residues Ser511 to Pro521 and Met560 to Pro572. A compositionally biased stretch (pro residues) spans Arg574 to Pro590. 2 stretches are compositionally biased toward low complexity: residues Ala591–Ala602 and Pro682–Pro692. The segment covering Ser693 to Ala711 has biased composition (pro residues).

The protein belongs to the nuclear hormone receptor family. NR1 subfamily.

Its subcellular location is the nucleus. Its function is as follows. Orphan receptor possibly involved in the regulation of genes in the ecdysteroid cascade. In Galleria mellonella (Greater wax moth), this protein is Ecdysone-inducible protein E75 (E75).